Here is a 109-residue protein sequence, read N- to C-terminus: Iron-sulfur cluster assembly protein CyaY (109 aa).

Belongs to the frataxin family.

Functionally, involved in iron-sulfur (Fe-S) cluster assembly. May act as a regulator of Fe-S biogenesis. The sequence is that of Iron-sulfur cluster assembly protein CyaY from Bordetella pertussis (strain Tohama I / ATCC BAA-589 / NCTC 13251).